A 273-amino-acid polypeptide reads, in one-letter code: Translation initiation factor 2 subunit alpha (273 aa).

The S1 motif domain occupies 12–83; that stretch reads GEFVVATVKN…EKGHIDLSLK (72 aa).

This sequence belongs to the eIF-2-alpha family. Heterotrimer composed of an alpha, a beta and a gamma chain.

In terms of biological role, eIF-2 functions in the early steps of protein synthesis by forming a ternary complex with GTP and initiator tRNA. This is Translation initiation factor 2 subunit alpha from Thermococcus gammatolerans (strain DSM 15229 / JCM 11827 / EJ3).